Reading from the N-terminus, the 33-residue chain is Dermaseptin-H6 (33 aa).

Position 33 is a leucine amide (L33).

As to expression, expressed by the skin glands.

The protein resides in the secreted. Functionally, has antimicrobial activity. This chain is Dermaseptin-H6, found in Pithecopus hypochondrialis (Orange-legged leaf frog).